Here is a 410-residue protein sequence, read N- to C-terminus: Platelet-activating factor acetylhydrolase IB subunit alpha (410 aa).

The tract at residues 1–38 (MVLSQRQRDELNRAIADYLRSNGYEEAYSVFKKEAELD) is required for self-association and interaction with PAFAH1B2 and PAFAH1B3. The segment at 1–66 (MVLSQRQRDE…SVIRLQKKVM (66 aa)) is interaction with NDE1. The tract at residues 1–102 (MVLSQRQRDE…EWIPRPPEKY (102 aa)) is interaction with NDEL1. In terms of domain architecture, LisH spans 7 to 39 (QRDELNRAIADYLRSNGYEEAYSVFKKEAELDM). Position 53 is an N6-acetyllysine (Lys-53). The stretch at 56–82 (TSVIRLQKKVMELESKLNEAKEEFTSG) forms a coiled coil. The segment at 83-410 (GPLGQKRDPK…DQTVKVWECR (328 aa)) is interaction with dynein and dynactin. 7 WD repeats span residues 106–147 (GHRS…RTLK), 148–187 (GHTD…CIRT), 190–229 (GHDH…CVKT), 232–271 (GHRE…CKAE), 274–333 (EHEH…CLMT), 336–377 (GHDN…KTLN), and 378–410 (AHEH…WECR). Phosphoserine is present on Ser-109. The interval 367–409 (YKNKRCMKTLNAHEHFVTSLDFHKTAPYVVTGSVDQTVKVWEC) is interaction with DCX. Residues 388 to 410 (FHKTAPYVVTGSVDQTVKVWECR) form an interaction with NDEL1 region.

This sequence belongs to the WD repeat LIS1/nudF family. Can self-associate. Component of the cytosolic PAF-AH (I) heterotetrameric enzyme, which is composed of PAFAH1B1 (beta), PAFAH1B2 (alpha2) and PAFAH1B3 (alpha1) subunits. The catalytic activity of the enzyme resides in the alpha1 (PAFAH1B3) and alpha2 (PAFAH1B2) subunits, whereas the beta subunit (PAFAH1B1) has regulatory activity. Trimer formation is not essential for the catalytic activity. Interacts with the catalytic dimer of PAF-AH (I) heterotetrameric enzyme: interacts with PAFAH1B2 homodimer (alpha2/alpha2 homodimer), PAFAH1B3 homodimer (alpha1/alpha1 homodimer) and PAFAH1B2-PAFAH1B3 heterodimer (alpha2/alpha1 heterodimer). Interacts with DCX, dynein, dynactin, IQGAP1, KATNB1, NDE1, NDEL1, NUDC and RSN. Interacts with DISC1, and this interaction is enhanced by NDEL1. Interacts with DAB1 when DAB1 is phosphorylated in response to RELN/reelin signaling. Interacts with INTS13. Interacts with DCDC1.

It is found in the cytoplasm. It localises to the cytoskeleton. Its subcellular location is the microtubule organizing center. The protein resides in the centrosome. The protein localises to the spindle. It is found in the nucleus membrane. Functionally, regulatory subunit (beta subunit) of the cytosolic type I platelet-activating factor (PAF) acetylhydrolase (PAF-AH (I)), an enzyme that catalyzes the hydrolyze of the acetyl group at the sn-2 position of PAF and its analogs and participates in PAF inactivation. Regulates the PAF-AH (I) activity in a catalytic dimer composition-dependent manner. Positively regulates the activity of the minus-end directed microtubule motor protein dynein. May enhance dynein-mediated microtubule sliding by targeting dynein to the microtubule plus end. Required for several dynein- and microtubule-dependent processes such as the maintenance of Golgi integrity, the peripheral transport of microtubule fragments and the coupling of the nucleus and centrosome. Required during brain development for the proliferation of neuronal precursors and the migration of newly formed neurons from the ventricular/subventricular zone toward the cortical plate. Neuronal migration involves a process called nucleokinesis, whereby migrating cells extend an anterior process into which the nucleus subsequently translocates. During nucleokinesis dynein at the nuclear surface may translocate the nucleus towards the centrosome by exerting force on centrosomal microtubules. Also required for proper activation of Rho GTPases and actin polymerization at the leading edge of locomoting cerebellar neurons and postmigratory hippocampal neurons in response to calcium influx triggered via NMDA receptors. May also play a role in other forms of cell locomotion including the migration of fibroblasts during wound healing. Required for dynein recruitment to microtubule plus ends and BICD2-bound cargos. May modulate the Reelin pathway through interaction of the PAF-AH (I) catalytic dimer with VLDLR. The protein is Platelet-activating factor acetylhydrolase IB subunit alpha of Macaca fascicularis (Crab-eating macaque).